A 303-amino-acid polypeptide reads, in one-letter code: Diaminopimelate epimerase (303 aa).

Substrate contacts are provided by N15, Q47, and N67. Catalysis depends on C76, which acts as the Proton donor. Residues 77–78, N163, N197, and 215–216 each bind substrate; these read GN and ER. C224 acts as the Proton acceptor in catalysis. 225 to 226 provides a ligand contact to substrate; the sequence is GS.

Belongs to the diaminopimelate epimerase family. Homodimer.

It is found in the cytoplasm. The catalysed reaction is (2S,6S)-2,6-diaminopimelate = meso-2,6-diaminopimelate. It functions in the pathway amino-acid biosynthesis; L-lysine biosynthesis via DAP pathway; DL-2,6-diaminopimelate from LL-2,6-diaminopimelate: step 1/1. Catalyzes the stereoinversion of LL-2,6-diaminopimelate (L,L-DAP) to meso-diaminopimelate (meso-DAP), a precursor of L-lysine and an essential component of the bacterial peptidoglycan. This chain is Diaminopimelate epimerase, found in Allorhizobium ampelinum (strain ATCC BAA-846 / DSM 112012 / S4) (Agrobacterium vitis (strain S4)).